The chain runs to 875 residues: Alanine--tRNA ligase (875 aa).

H563, H567, C665, and H669 together coordinate Zn(2+).

This sequence belongs to the class-II aminoacyl-tRNA synthetase family. The cofactor is Zn(2+).

It localises to the cytoplasm. The enzyme catalyses tRNA(Ala) + L-alanine + ATP = L-alanyl-tRNA(Ala) + AMP + diphosphate. In terms of biological role, catalyzes the attachment of alanine to tRNA(Ala) in a two-step reaction: alanine is first activated by ATP to form Ala-AMP and then transferred to the acceptor end of tRNA(Ala). Also edits incorrectly charged Ser-tRNA(Ala) and Gly-tRNA(Ala) via its editing domain. The polypeptide is Alanine--tRNA ligase (Shewanella pealeana (strain ATCC 700345 / ANG-SQ1)).